Reading from the N-terminus, the 82-residue chain is RNA-binding protein YbxF (82 aa).

Belongs to the eukaryotic ribosomal protein eL8 family.

This chain is RNA-binding protein YbxF, found in Geobacillus stearothermophilus (Bacillus stearothermophilus).